A 327-amino-acid polypeptide reads, in one-letter code: Transcription factor bHLH48 (327 aa).

Positions 137–179 (EPAETDSMVENQNQSYSSGKRKEREKKVKSSTKKNKSSVESDK) are disordered. A bHLH domain is found at 191–241 (QATDNHSLAERARREKINARMKLLQELVPGCDKIQGTALVLDEIINHVQTL).

As to quaternary structure, homodimer. In terms of tissue distribution, expressed in leaves, stems, and flowers.

The protein resides in the nucleus. The protein is Transcription factor bHLH48 (BHLH48) of Arabidopsis thaliana (Mouse-ear cress).